We begin with the raw amino-acid sequence, 1893 residues long: Protein TIC 214 (1893 aa).

The next 6 helical transmembrane spans lie at 18-38 (IINS…FSIG), 63-83 (AITG…YAPL), 87-107 (LGRP…HFFW), 127-147 (LSIQ…HFIL), 175-195 (VGWL…LVWI), and 224-244 (IFSI…PSPI). 2 stretches are compositionally biased toward basic and acidic residues: residues 249-258 (MKETSETEER) and 268-287 (EIER…RSTE). The disordered stretch occupies residues 249 to 317 (MKETSETEER…TEEIRVNGKE (69 aa)). The segment covering 298–309 (EKEDPDKIDETE) has biased composition (acidic residues). The chain crosses the membrane as a helical span at residues 1126 to 1146 (LHYFIKFFIERIYIDILLCLI).

The protein belongs to the TIC214 family. As to quaternary structure, part of the Tic complex.

It localises to the plastid. It is found in the chloroplast inner membrane. Functionally, involved in protein precursor import into chloroplasts. May be part of an intermediate translocation complex acting as a protein-conducting channel at the inner envelope. The protein is Protein TIC 214 of Vitis vinifera (Grape).